A 434-amino-acid chain; its full sequence is Ribulose bisphosphate carboxylase-like protein (434 aa).

Residues lysine 198, aspartate 200, and glutamate 201 each contribute to the Mg(2+) site. An N6-carboxylysine modification is found at lysine 198.

This sequence belongs to the RuBisCO large chain family. Type IV subfamily. As to quaternary structure, homodimer. The cofactor is Mg(2+).

In terms of biological role, may be involved in sulfur metabolism and oxidative stress response. Does not show RuBisCO activity. The polypeptide is Ribulose bisphosphate carboxylase-like protein (Chlorobaculum thiosulfatiphilum (Chlorobium limicola f.sp. thiosulfatophilum)).